The primary structure comprises 140 residues: L-fucose mutarotase (140 aa).

The active-site Proton donor is histidine 22. Residues aspartate 30, arginine 107, and 129–131 (YGN) each bind substrate.

The protein belongs to the RbsD / FucU family. FucU mutarotase subfamily. Homodecamer.

It is found in the cytoplasm. The catalysed reaction is alpha-L-fucose = beta-L-fucose. Its pathway is carbohydrate metabolism; L-fucose metabolism. Functionally, involved in the anomeric conversion of L-fucose. In Salmonella paratyphi B (strain ATCC BAA-1250 / SPB7), this protein is L-fucose mutarotase.